Reading from the N-terminus, the 269-residue chain is Imidazoleglycerol-phosphate dehydratase 2, chloroplastic (269 aa).

Residues 1 to 51 (MTTAPFLFPSLSRLHSARASSFPKPPVGSGAGVAFPARPYGSSLRLRSSVM) constitute a chloroplast transit peptide. Substrate contacts are provided by residues glutamate 83, 109-117 (HMLDQLASH), 135-139 (HHSNE), arginine 161, and arginine 183. 4 residues coordinate Mn(2+): histidine 109, histidine 135, histidine 136, and glutamate 139. Histidine 207, histidine 231, histidine 232, and glutamate 235 together coordinate Mn(2+). Residues 231-239 (HHIIEATFK) and 261-263 (SSK) each bind substrate.

Belongs to the imidazoleglycerol-phosphate dehydratase family. It depends on Mn(2+) as a cofactor.

The protein resides in the plastid. Its subcellular location is the chloroplast. It catalyses the reaction D-erythro-1-(imidazol-4-yl)glycerol 3-phosphate = 3-(imidazol-4-yl)-2-oxopropyl phosphate + H2O. It functions in the pathway amino-acid biosynthesis; L-histidine biosynthesis; L-histidine from 5-phospho-alpha-D-ribose 1-diphosphate: step 6/9. The protein is Imidazoleglycerol-phosphate dehydratase 2, chloroplastic of Triticum aestivum (Wheat).